Here is a 147-residue protein sequence, read N- to C-terminus: Hemoglobin subunit epsilon (147 aa).

The Globin domain maps to 3-147 (HFTAEEKAAV…VAIALAHKYH (145 aa)). Residues Ser-14 and Ser-51 each carry the phosphoserine modification. Residues His-64 and His-93 each contribute to the heme b site.

This sequence belongs to the globin family. As to quaternary structure, heterotetramer of two alpha chains and two epsilon chains in early embryonic hemoglobin Gower-2; two zeta chains and two epsilon chains in early embryonic hemoglobin Gower-1. As to expression, red blood cells.

Its function is as follows. The epsilon chain is a beta-type chain of early mammalian embryonic hemoglobin. The protein is Hemoglobin subunit epsilon (HBE1) of Pan troglodytes (Chimpanzee).